The primary structure comprises 394 residues: Acetate kinase 1 (394 aa).

N8 lines the Mg(2+) pocket. K15 lines the ATP pocket. R90 lines the substrate pocket. D147 (proton donor/acceptor) is an active-site residue. Residues H207 to G211 and D282 to R284 each bind ATP. E382 contributes to the Mg(2+) binding site.

This sequence belongs to the acetokinase family. In terms of assembly, homodimer. Mg(2+) is required as a cofactor. Requires Mn(2+) as cofactor.

It localises to the cytoplasm. The catalysed reaction is acetate + ATP = acetyl phosphate + ADP. The protein operates within metabolic intermediate biosynthesis; acetyl-CoA biosynthesis; acetyl-CoA from acetate: step 1/2. In terms of biological role, catalyzes the formation of acetyl phosphate from acetate and ATP. Can also catalyze the reverse reaction. This Latilactobacillus sakei subsp. sakei (strain 23K) (Lactobacillus sakei subsp. sakei) protein is Acetate kinase 1.